The chain runs to 112 residues: Iron-sulfur cluster assembly protein CyaY (112 aa).

Belongs to the frataxin family.

Functionally, involved in iron-sulfur (Fe-S) cluster assembly. May act as a regulator of Fe-S biogenesis. The protein is Iron-sulfur cluster assembly protein CyaY of Herminiimonas arsenicoxydans.